A 638-amino-acid polypeptide reads, in one-letter code: Broad-specificity ulvan lyase (638 aa).

Positions 1–27 (MKRRNFIQLSSLATIGMSLPSAGIVNA) are cleaved as a signal peptide.

Belongs to the polysaccharide lyase 37 family.

The protein localises to the periplasm. The enzyme catalyses Endolytic cleavage of (1-&gt;4)-beta-galactosaminic bonds between N-acetylgalactosamine and either D-glucuronic acid or L-iduronic acid to produce a mixture of Delta(4)-unsaturated oligosaccharides of different sizes that are ultimately degraded to Delta(4)-unsaturated tetra- and disaccharides.. It carries out the reaction Elimination of sulfate, appears to act on linkages between N-acetyl-D-glucosamine and uronate. Product is an unsaturated sugar.. Its function is as follows. Broad-specificity lyase involved in ulvan degradation. Ulvan is the main polysaccharide component of the Ulvales (green seaweed) cell wall. It is composed of disaccharide building blocks comprising 3-sulfated rhamnose (Rha3S) linked to D-glucuronic acid (GlcA), L-iduronic acid (IduA), or D-xylose (Xyl). Ulvan lyase catalyzes the endolytic cleavage of the glycosidic bond between Rha3S and the uronic acids GlcA or IduA, producing oligosaccharides that have unsaturated 4-deoxy-L-threo-hex-4-enopyranosiduronic acid (deltaUA) at the non-reducing end. This results eventually in the degradation of the ulvan polysaccharide into deltaUA-Rha3S disaccharides and deltaUA-Rha3S-Xyl-Rha3S tetrasaccharides. It is also able to degrade the glycosaminoglycans heparan sulfate and chondroitin sulfate. Not active against pectin, xanthan or alginate. The chain is Broad-specificity ulvan lyase from Formosa agariphila (strain DSM 15362 / KCTC 12365 / LMG 23005 / KMM 3901 / M-2Alg 35-1).